The primary structure comprises 121 residues: Large ribosomal subunit protein P2 (121 aa).

The span at 72-99 shows a compositional bias: low complexity; the sequence is VAVPSGGAPAAATAAAEAPKGGDKAAAP. A disordered region spans residues 72 to 121; the sequence is VAVPSGGAPAAATAAAEAPKGGDKAAAPPKEEKKEESEESDADMGFSPFD.

This sequence belongs to the eukaryotic ribosomal protein P1/P2 family. As to quaternary structure, P1 and P2 exist as dimers at the large ribosomal subunit. In terms of processing, phosphorylated.

Plays an important role in the elongation step of protein synthesis. The chain is Large ribosomal subunit protein P2 from Taenia solium (Pork tapeworm).